A 741-amino-acid chain; its full sequence is NAD(P)H-quinone oxidoreductase subunit 5, chloroplastic (741 aa).

Helical transmembrane passes span 9-29 (WIIPFLPLPVPMLIGLGLLLF), 40-60 (WAFQSVFLLSIVMILSMNLSI), 89-109 (IDPLTSIMSILITTVGIMVLI), 125-145 (FAYMSFFSTSMLGLVTSSNLI), 147-167 (IYIFWELVGVCSYLLIGFWFT), 185-205 (GDFGLLLGILGFYWITGSFEF), 219-239 (NEVNFLFVTLCAILLFAGAIA), 258-278 (TPISALIHAATMVAAGIFLVA), 283-303 (LFIVIPHIMNFISLIGIITVF), 327-347 (LGYMMLALGMGSYRSALFHLI), 354-374 (ALLFLGSGSVIHSMETLVGYC), 396-416 (NSFLLGTLSLCGIPPLACFWS), 425-445 (WLYSPIFGIIAWSTAGLTAFY), 549-569 (LFPILVLILFTLFVGFLGIPF), 605-625 (FFSVSIASFGIFIAFFLYKPV), and 721-741 (YLFFYFSYVAIFLLIYYFFNL).

The protein belongs to the complex I subunit 5 family. As to quaternary structure, NDH is composed of at least 16 different subunits, 5 of which are encoded in the nucleus.

It localises to the plastid. It is found in the chloroplast thylakoid membrane. The enzyme catalyses a plastoquinone + NADH + (n+1) H(+)(in) = a plastoquinol + NAD(+) + n H(+)(out). It catalyses the reaction a plastoquinone + NADPH + (n+1) H(+)(in) = a plastoquinol + NADP(+) + n H(+)(out). Functionally, NDH shuttles electrons from NAD(P)H:plastoquinone, via FMN and iron-sulfur (Fe-S) centers, to quinones in the photosynthetic chain and possibly in a chloroplast respiratory chain. The immediate electron acceptor for the enzyme in this species is believed to be plastoquinone. Couples the redox reaction to proton translocation, and thus conserves the redox energy in a proton gradient. The polypeptide is NAD(P)H-quinone oxidoreductase subunit 5, chloroplastic (ndhF) (Cichorium intybus (Chicory)).